The sequence spans 152 residues: Nuclear cap-binding protein subunit 2 (152 aa).

Residues Tyr8, Tyr31, 100–104 (RTDWD), 111–115 (RQFGR), and 121–122 (QV) contribute to the mRNA site. An RRM domain is found at 28–106 (TTLYVGNMSF…RIIRTDWDAG (79 aa)).

This sequence belongs to the RRM NCBP2 family. In terms of assembly, component of the nuclear cap-binding complex (CBC), a heterodimer composed of Cbp80 and Cbp20 that interacts with m7GpppG-capped RNA.

It is found in the nucleus. In terms of biological role, component of the cap-binding complex (CBC), which binds co-transcriptionally to the 5' cap of pre-mRNAs and is involved in various processes such as pre-mRNA splicing and RNA-mediated gene silencing (RNAi). The CBC complex is involved in miRNA-mediated RNA interference and is required for primary microRNAs (miRNAs) processing. Also involved in innate immunity via the short interfering RNAs (siRNAs) processing machinery by restricting the viral RNA production. In the CBC complex, Cbp20 recognizes and binds capped RNAs (m7GpppG-capped RNA) but requires Cbp80 to stabilize the movement of its N-terminal loop and lock the CBC into a high affinity cap-binding state with the cap structure. The chain is Nuclear cap-binding protein subunit 2 (Cbp20) from Ixodes scapularis (Black-legged tick).